A 570-amino-acid chain; its full sequence is Sulfite reductase [NADPH] hemoprotein beta-component (570 aa).

Positions 434, 440, 479, and 483 each coordinate [4Fe-4S] cluster. Cysteine 483 is a binding site for siroheme.

The protein belongs to the nitrite and sulfite reductase 4Fe-4S domain family. As to quaternary structure, alpha(8)-beta(8). The alpha component is a flavoprotein, the beta component is a hemoprotein. It depends on siroheme as a cofactor. [4Fe-4S] cluster is required as a cofactor.

The enzyme catalyses hydrogen sulfide + 3 NADP(+) + 3 H2O = sulfite + 3 NADPH + 4 H(+). The protein operates within sulfur metabolism; hydrogen sulfide biosynthesis; hydrogen sulfide from sulfite (NADPH route): step 1/1. Its function is as follows. Component of the sulfite reductase complex that catalyzes the 6-electron reduction of sulfite to sulfide. This is one of several activities required for the biosynthesis of L-cysteine from sulfate. This chain is Sulfite reductase [NADPH] hemoprotein beta-component, found in Escherichia coli (strain SMS-3-5 / SECEC).